A 420-amino-acid polypeptide reads, in one-letter code: Ribosome biogenesis protein WDR12 homolog (420 aa).

Residues 10–92 form a ubiquitin-like (UBL) domain region; it reads VQVHLKTKQE…EDAIEIEYVE (83 aa). WD repeat units follow at residues 104–142, 143–185, 192–231, 250–288, 290–329, 335–375, and 379–417; these read LHDD…LTIS, GHTA…NAVD, GHER…GVEG, GHRE…IKTE, STNK…GSVV, GHNA…APLY, and GHGD…AEDT.

This sequence belongs to the WD repeat WDR12/YTM1 family.

The protein resides in the nucleus. It localises to the nucleolus. Its subcellular location is the nucleoplasm. Its function is as follows. Required for maturation of ribosomal RNAs and formation of the large ribosomal subunit. The sequence is that of Ribosome biogenesis protein WDR12 homolog from Drosophila simulans (Fruit fly).